We begin with the raw amino-acid sequence, 227 residues long: Urease subunit gamma/beta (227 aa).

The urease gamma stretch occupies residues 1–101; that stretch reads MRLTPTERDR…LAVVADPVGG (101 aa). The segment at 102 to 227 is urease beta; sequence GGLGDDAPGA…AACGYLGADR (126 aa).

It in the N-terminal section; belongs to the urease gamma subunit family. This sequence in the C-terminal section; belongs to the urease beta subunit family. Heterohexamer of 3 UreC (alpha) and 3 UreAB (gamma/beta) subunits.

It localises to the cytoplasm. The catalysed reaction is urea + 2 H2O + H(+) = hydrogencarbonate + 2 NH4(+). Its pathway is nitrogen metabolism; urea degradation; CO(2) and NH(3) from urea (urease route): step 1/1. The chain is Urease subunit gamma/beta from Streptomyces coelicolor (strain ATCC BAA-471 / A3(2) / M145).